Here is a 740-residue protein sequence, read N- to C-terminus: Polyribonucleotide nucleotidyltransferase (740 aa).

Positions 492 and 498 each coordinate Mg(2+). In terms of domain architecture, KH spans 559–618; the sequence is PMVQTLEIQKEKIRDVIGLGGKVIKELCKTFDVEIDISENGEVKVWGNVGENVKKAVQSI. One can recognise an S1 motif domain in the interval 628 to 696; that stretch reads GDIFDGEVVK…HKNRVKLTLR (69 aa).

Belongs to the polyribonucleotide nucleotidyltransferase family. Mg(2+) serves as cofactor.

Its subcellular location is the cytoplasm. It catalyses the reaction RNA(n+1) + phosphate = RNA(n) + a ribonucleoside 5'-diphosphate. Functionally, involved in mRNA degradation. Catalyzes the phosphorolysis of single-stranded polyribonucleotides processively in the 3'- to 5'-direction. In Orientia tsutsugamushi (strain Boryong) (Rickettsia tsutsugamushi), this protein is Polyribonucleotide nucleotidyltransferase.